A 161-amino-acid chain; its full sequence is Phosphopantetheine adenylyltransferase (161 aa).

S8 contributes to the substrate binding site. ATP is bound by residues 8-9 (SF) and H16. Substrate-binding residues include K40, T72, and R86. ATP-binding positions include 87–89 (GLR), E97, and 122–128 (HSFLSSS).

Belongs to the bacterial CoaD family. In terms of assembly, homohexamer. The cofactor is Mg(2+).

The protein resides in the cytoplasm. It catalyses the reaction (R)-4'-phosphopantetheine + ATP + H(+) = 3'-dephospho-CoA + diphosphate. Its pathway is cofactor biosynthesis; coenzyme A biosynthesis; CoA from (R)-pantothenate: step 4/5. In terms of biological role, reversibly transfers an adenylyl group from ATP to 4'-phosphopantetheine, yielding dephospho-CoA (dPCoA) and pyrophosphate. This is Phosphopantetheine adenylyltransferase from Gloeobacter violaceus (strain ATCC 29082 / PCC 7421).